We begin with the raw amino-acid sequence, 479 residues long: Glutamate--tRNA ligase (479 aa).

Residues 9 to 19 (PSPTGNLHIGT) carry the 'HIGH' region motif. A 'KMSKS' region motif is present at residues 243-247 (KLSKR). K246 is a binding site for ATP.

It belongs to the class-I aminoacyl-tRNA synthetase family. Glutamate--tRNA ligase type 1 subfamily. Monomer.

Its subcellular location is the cytoplasm. The catalysed reaction is tRNA(Glu) + L-glutamate + ATP = L-glutamyl-tRNA(Glu) + AMP + diphosphate. In terms of biological role, catalyzes the attachment of glutamate to tRNA(Glu) in a two-step reaction: glutamate is first activated by ATP to form Glu-AMP and then transferred to the acceptor end of tRNA(Glu). This chain is Glutamate--tRNA ligase, found in Synechococcus sp. (strain JA-3-3Ab) (Cyanobacteria bacterium Yellowstone A-Prime).